Consider the following 376-residue polypeptide: Enoyl-[acyl-carrier-protein] reductase, mitochondrial (376 aa).

The active-site Proton donor is the Tyr72. NADP(+) contacts are provided by residues Asn154, 182–185 (TSAV), 205–207 (RDR), 280–283 (YGGM), 305–307 (YWI), and Lys369.

Belongs to the zinc-containing alcohol dehydrogenase family. Quinone oxidoreductase subfamily. Homodimer.

It localises to the mitochondrion matrix. It carries out the reaction a 2,3-saturated acyl-[ACP] + NADP(+) = a (2E)-enoyl-[ACP] + NADPH + H(+). Catalyzes the NADPH-dependent reduction of trans-2-enoyl thioesters in mitochondrial fatty acid synthesis (fatty acid synthesis type II). Fatty acid chain elongation in mitochondria uses acyl carrier protein (ACP) as an acyl group carrier, but the enzyme accepts both ACP and CoA thioesters as substrates in vitro. Required for respiration and the maintenance of the mitochondrial compartment. In Eremothecium gossypii (strain ATCC 10895 / CBS 109.51 / FGSC 9923 / NRRL Y-1056) (Yeast), this protein is Enoyl-[acyl-carrier-protein] reductase, mitochondrial (ETR1).